A 498-amino-acid chain; its full sequence is ATP synthase subunit beta, chloroplastic (498 aa).

An ATP-binding site is contributed by 172 to 179 (GGAGVGKT).

It belongs to the ATPase alpha/beta chains family. As to quaternary structure, F-type ATPases have 2 components, CF(1) - the catalytic core - and CF(0) - the membrane proton channel. CF(1) has five subunits: alpha(3), beta(3), gamma(1), delta(1), epsilon(1). CF(0) has four main subunits: a(1), b(1), b'(1) and c(9-12).

The protein localises to the plastid. It is found in the chloroplast thylakoid membrane. The enzyme catalyses ATP + H2O + 4 H(+)(in) = ADP + phosphate + 5 H(+)(out). In terms of biological role, produces ATP from ADP in the presence of a proton gradient across the membrane. The catalytic sites are hosted primarily by the beta subunits. This is ATP synthase subunit beta, chloroplastic from Nandina domestica (Heavenly bamboo).